Consider the following 424-residue polypeptide: Glutamate-1-semialdehyde 2,1-aminomutase (424 aa).

Position 266 is an N6-(pyridoxal phosphate)lysine (lysine 266).

The protein belongs to the class-III pyridoxal-phosphate-dependent aminotransferase family. HemL subfamily. In terms of assembly, homodimer. Requires pyridoxal 5'-phosphate as cofactor.

The protein localises to the cytoplasm. It catalyses the reaction (S)-4-amino-5-oxopentanoate = 5-aminolevulinate. It functions in the pathway porphyrin-containing compound metabolism; protoporphyrin-IX biosynthesis; 5-aminolevulinate from L-glutamyl-tRNA(Glu): step 2/2. The chain is Glutamate-1-semialdehyde 2,1-aminomutase from Azoarcus sp. (strain BH72).